A 141-amino-acid polypeptide reads, in one-letter code: uncharacterized protein (141 aa).

This is an uncharacterized protein from Escherichia coli (strain K12).